We begin with the raw amino-acid sequence, 297 residues long: Calponin-1 (297 aa).

The Calponin-homology (CH) domain occupies 28 to 131 (HQREQELREW…STLLALASMA (104 aa)). 3 Calponin-like repeats span residues 164 to 189 (IGLQMGTNKFASQQGMTAYGTRRHLY), 204 to 229 (ISLQMGTNKGASQAGMTAPGTKRQIF), and 243 to 268 (VSLQMGSNKGASQRGMTVYGLPRQVY). Position 170 is a phosphothreonine; by ROCK2 (Thr170). Phosphoserine; by ROCK2 is present on Ser175. Phosphothreonine; by ROCK2 occurs at positions 180 and 184. Thr259 carries the phosphothreonine; by ROCK2 modification.

Belongs to the calponin family. In terms of assembly, part of cGMP kinase signaling complex at least composed of ACTA2/alpha-actin, CNN1/calponin H1, PLN/phospholamban, PRKG1 and ITPR1. In terms of tissue distribution, smooth muscle, and tissues containing significant amounts of smooth muscle.

In terms of biological role, thin filament-associated protein that is implicated in the regulation and modulation of smooth muscle contraction. It is capable of binding to actin, calmodulin and tropomyosin. The interaction of calponin with actin inhibits the actomyosin Mg-ATPase activity. In Homo sapiens (Human), this protein is Calponin-1 (CNN1).